The primary structure comprises 300 residues: Ribosomal protein bS6--L-glutamate ligase (300 aa).

In terms of domain architecture, ATP-grasp spans 104–287 (MQLLARQGID…IAGKMIRWIE (184 aa)). ATP-binding positions include K141, 178 to 179 (EY), D187, and 211 to 213 (RSN). Mg(2+) is bound by residues D248, E260, and N262. Mn(2+) is bound by residues D248, E260, and N262.

Belongs to the RimK family. Mg(2+) is required as a cofactor. Requires Mn(2+) as cofactor.

Its function is as follows. An L-glutamate ligase that catalyzes the ATP-dependent post-translational addition of glutamate residues to the C-terminus of ribosomal protein bS6 (RpsF). Is also able to catalyze the synthesis of poly-alpha-glutamate in vitro, via ATP hydrolysis from unprotected glutamate as substrate. The number of glutamate residues added to either RpsF or to poly-alpha-glutamate changes with pH. The protein is Ribosomal protein bS6--L-glutamate ligase of Escherichia fergusonii (strain ATCC 35469 / DSM 13698 / CCUG 18766 / IAM 14443 / JCM 21226 / LMG 7866 / NBRC 102419 / NCTC 12128 / CDC 0568-73).